We begin with the raw amino-acid sequence, 232 residues long: Large ribosomal subunit protein uL1 (232 aa).

It belongs to the universal ribosomal protein uL1 family. As to quaternary structure, part of the 50S ribosomal subunit.

Functionally, binds directly to 23S rRNA. The L1 stalk is quite mobile in the ribosome, and is involved in E site tRNA release. Its function is as follows. Protein L1 is also a translational repressor protein, it controls the translation of the L11 operon by binding to its mRNA. This is Large ribosomal subunit protein uL1 from Chlamydia abortus (strain DSM 27085 / S26/3) (Chlamydophila abortus).